Reading from the N-terminus, the 197-residue chain is Ras-related protein RabG2 (197 aa).

Residues 13–20 (GDSAVGKT), 61–65 (DTAGQ), and 119–122 (NKCD) each bind GTP. The interval 175–197 (SKPSVVNPGSGGTSNTGGKKKFC) is disordered. The S-geranylgeranyl cysteine moiety is linked to residue Cys-197.

This sequence belongs to the small GTPase superfamily. Rab family.

It is found in the cell membrane. The sequence is that of Ras-related protein RabG2 (rabG2) from Dictyostelium discoideum (Social amoeba).